The sequence spans 448 residues: Vimentin (448 aa).

The segment at 1-77 is head; that stretch reads PRHLEPAGSN…FSLADAINTE (77 aa). S9 is subject to Phosphoserine. T16 is a glycosylation site (O-linked (GlcNAc) threonine). Position 17 is a phosphoserine; by PKC; alternate (S17). Residue S17 is glycosylated (O-linked (GlcNAc) serine; alternate). S22 bears the Phosphoserine; by CaMK2, PKA, PKC and ROCK2 mark. Residues S29, S31, and S33 each carry the phosphoserine modification. Y35 bears the Phosphotyrosine mark. S37 is modified (phosphoserine). S38 is modified (phosphoserine; by CDK5 and CDK1). A Phosphotyrosine modification is found at Y43. S48 bears the Phosphoserine; by PKA and PKC mark. A Phosphoserine; by AURKB and ROCK2 modification is found at S54. At S55 the chain carries Phosphoserine. Position 65 is a phosphoserine; by CaMK2 (S65). A Phosphoserine modification is found at S69. The coil 1A stretch occupies residues 78–113; sequence FKNTRTNEKVELQELNDRFADYIDKVRFLEQQNKIL. Positions 78 to 113 form a coiled coil; that stretch reads FKNTRTNEKVELQELNDRFADYIDKVRFLEQQNKIL. Residues 85–393 enclose the IF rod domain; sequence EKVELQELND…KLLEGEESRI (309 aa). Residue K86 forms a Glycyl lysine isopeptide (Lys-Gly) (interchain with G-Cter in SUMO2) linkage. Y99 carries the phosphotyrosine modification. An N6-acetyllysine; alternate mark is found at K102, K111, and K121. K102 and K111 each carry N6-succinyllysine; alternate. Glycyl lysine isopeptide (Lys-Gly) (interchain with G-Cter in SUMO2); alternate cross-links involve residues K102, K111, and K121. The tract at residues 114-135 is linker 1; the sequence is LAELEQLKGQGKSRLGDLYEEE. Phosphoserine is present on S126. Positions 136–227 form a coiled coil; that stretch reads MRELRRQVDQ…KLHDEEIQEL (92 aa). Residues 136 to 227 form a coil 1B region; sequence MRELRRQVDQ…KLHDEEIQEL (92 aa). The residue at position 150 (K150) is an N6-acetyllysine. An N6-acetyllysine; alternate modification is found at K170. K170 is modified (N6-succinyllysine; alternate). S196 carries the post-translational modification Phosphoserine. Position 205 is an N6-acetyllysine; alternate (K205). K205 participates in a covalent cross-link: Glycyl lysine isopeptide (Lys-Gly) (interchain with G-Cter in SUMO2); alternate. A Phosphoserine modification is found at S208. At K217 the chain carries N6-acetyllysine. The linker 12 stretch occupies residues 228–250; it reads QAQIQEQHVQIDVDVSKPDLTAA. A Glycyl lysine isopeptide (Lys-Gly) (interchain with G-Cter in SUMO2) cross-link involves residue K244. Positions 251-389 are coil 2; it reads LRDVRQQYES…ATYRKLLEGE (139 aa). K276 carries the N6-acetyllysine; alternate modification. K276 is subject to N6-succinyllysine; alternate. K276 is covalently cross-linked (Glycyl lysine isopeptide (Lys-Gly) (interchain with G-Cter in SUMO2); alternate). Position 281 is a phosphoserine (S281). A coiled-coil region spans residues 285 to 389; the sequence is NRNNDALRQA…ATYRKLLEGE (105 aa). Residue K295 forms a Glycyl lysine isopeptide (Lys-Gly) (interchain with G-Cter in SUMO2) linkage. S307 carries the phosphoserine modification. Residues 308–311 carry the [IL]-x-C-x-x-[DE] motif motif; sequence LTCE. Residue K355 is modified to N6-acetyllysine; alternate. A Glycyl lysine isopeptide (Lys-Gly) (interchain with G-Cter in SUMO2); alternate cross-link involves residue K355. Residues 390–448 form a tail region; sequence ESRISLPLPNFSSLNLRETNLESLPLVDTHSKRTLLIKTVETRDGQVINETSQHHDDLE. 4 positions are modified to phosphoserine: S391, S394, S401, and S402. T408 is modified (phosphothreonine). Residue S412 is modified to Phosphoserine. Phosphothreonine is present on T418. Residue S420 is modified to Phosphoserine. K421 participates in a covalent cross-link: Glycyl lysine isopeptide (Lys-Gly) (interchain with G-Cter in SUMO2). Position 427 is an N6-acetyllysine; alternate (K427). K427 carries the N6-succinyllysine; alternate modification. K427 is covalently cross-linked (Glycyl lysine isopeptide (Lys-Gly) (interchain with G-Cter in SUMO2); alternate). K427 participates in a covalent cross-link: Glycyl lysine isopeptide (Lys-Gly) (interchain with G-Cter in SUMO1); alternate. A phosphothreonine mark is found at T428 and T440. A Phosphoserine modification is found at S441.

Belongs to the intermediate filament family. As to quaternary structure, homomer assembled from elementary dimers. Identified in complexes that contain VIM, EZR, AHNAK, BFSP1, BFSP2, ANK2, PLEC, PRX and spectrin. Interacts with BCAS3. Interacts with LGSN. Interacts with SYNM. Interacts (via rod region) with PLEC (via CH 1 domain). Interacts with STK33. Interacts with LARP6. Interacts with RAB8B. Interacts with TOR1A; the interaction associates TOR1A with the cytoskeleton. Interacts with TOR1AIP1. Interacts with TOR1AIP1. Interacts with DIAPH1. Interacts with EPPK1; interaction is dependent of higher-order structure of intermediate filament. Interacts with the non-receptor tyrosine kinase SRMS; the interaction leads to phosphorylation of VIM. Interacts with NOD2. Interacts (via head region) with CORO1C. Interacts with HDGF. Interacts with PRKCE (via phorbol-ester/DAG-type 2 domain). Interacts with BFSP2. Interacts with PPL. Interacts with PKP1 and PKP2. Interacts with SCRIB (via PDZ domains); the interaction protects SCRIB from proteasomal degradation and facilitates SCRIB localization to intermediate filaments, the interaction is reduced by cell contact inhibition. Post-translationally, one of the most prominent phosphoproteins in various cells of mesenchymal origin. Phosphorylation is enhanced during cell division, at which time vimentin filaments are significantly reorganized. Phosphorylation by PKN1 inhibits the formation of filaments. Filament disassembly during mitosis is promoted by phosphorylation at Ser-37 as well as by nestin. Phosphorylated at Ser-38 by CDK5 during neutrophil secretion in the cytoplasm. Phosphorylated by STK33. Phosphorylated on tyrosine residues by SRMS. S-nitrosylation is induced by interferon-gamma and oxidatively-modified low-densitity lipoprotein (LDL(ox)) possibly implicating the iNOS-S100A8/9 transnitrosylase complex.

Its subcellular location is the cytoplasm. It localises to the cytoskeleton. The protein resides in the nucleus matrix. The protein localises to the cell membrane. Functionally, vimentins are class-III intermediate filaments found in various non-epithelial cells, especially mesenchymal cells. Vimentin is attached to the nucleus, endoplasmic reticulum, and mitochondria, either laterally or terminally. Plays a role in cell directional movement, orientation, cell sheet organization and Golgi complex polarization at the cell migration front. Protects SCRIB from proteasomal degradation and facilitates its localization to intermediate filaments in a cell contact-mediated manner. Its function is as follows. Involved with LARP6 in the stabilization of type I collagen mRNAs for CO1A1 and CO1A2. In Cricetulus griseus (Chinese hamster), this protein is Vimentin (VIM).